The following is a 324-amino-acid chain: Carbonic anhydrase 15 (324 aa).

Residues 1 to 18 form the signal peptide; sequence MWALDFLLSFLLIQLAAQ. The Alpha-carbonic anhydrase domain maps to 23-293; that stretch reads GTWCYDSQDP…LGGRRISASP (271 aa). H90 (proton acceptor) is an active-site residue. Residues H122, H124, and H147 each contribute to the Zn(2+) site. The active site involves Y155. N184, N194, and N203 each carry an N-linked (GlcNAc...) asparagine glycan. 231-232 serves as a coordination point for substrate; the sequence is TT. Residues 269–290 are disordered; sequence LHPRPLTSNFRPQQPLGGRRIS.

It belongs to the alpha-carbonic anhydrase family. Requires Zn(2+) as cofactor.

It is found in the secreted. The catalysed reaction is hydrogencarbonate + H(+) = CO2 + H2O. Its activity is regulated as follows. Repressed by coumarins. In terms of biological role, reversible hydration of carbon dioxide. This chain is Carbonic anhydrase 15 (Ca15), found in Mus musculus (Mouse).